The sequence spans 560 residues: Dihydroxy-acid dehydratase (560 aa).

Asp-80 lines the Mg(2+) pocket. Cys-121 is a [2Fe-2S] cluster binding site. Asp-122 and Lys-123 together coordinate Mg(2+). At Lys-123 the chain carries N6-carboxylysine. Cys-194 contacts [2Fe-2S] cluster. Residue Glu-447 coordinates Mg(2+). Residue Ser-473 is the Proton acceptor of the active site.

The protein belongs to the IlvD/Edd family. As to quaternary structure, homodimer. [2Fe-2S] cluster serves as cofactor. The cofactor is Mg(2+).

The catalysed reaction is (2R)-2,3-dihydroxy-3-methylbutanoate = 3-methyl-2-oxobutanoate + H2O. It catalyses the reaction (2R,3R)-2,3-dihydroxy-3-methylpentanoate = (S)-3-methyl-2-oxopentanoate + H2O. Its pathway is amino-acid biosynthesis; L-isoleucine biosynthesis; L-isoleucine from 2-oxobutanoate: step 3/4. It participates in amino-acid biosynthesis; L-valine biosynthesis; L-valine from pyruvate: step 3/4. Functionally, functions in the biosynthesis of branched-chain amino acids. Catalyzes the dehydration of (2R,3R)-2,3-dihydroxy-3-methylpentanoate (2,3-dihydroxy-3-methylvalerate) into 2-oxo-3-methylpentanoate (2-oxo-3-methylvalerate) and of (2R)-2,3-dihydroxy-3-methylbutanoate (2,3-dihydroxyisovalerate) into 2-oxo-3-methylbutanoate (2-oxoisovalerate), the penultimate precursor to L-isoleucine and L-valine, respectively. The sequence is that of Dihydroxy-acid dehydratase from Chloroherpeton thalassium (strain ATCC 35110 / GB-78).